The chain runs to 166 residues: MTAAVNDAPALDLEVQYVVAWRAGLPPEAAFRRWVSAALAAGGHTGPAALAVRVVDKAEGRRLNHDYRGRDYPTNVLSFPFEAPPGLDEPLPELGDLVICAPVVEREAREQGKPEADHWAHLVVHGVLHLLGYDHEAAEEAEAMEGLERRILAGLGIADPYRLDEQ.

Zn(2+) contacts are provided by His-125, His-129, and His-135.

This sequence belongs to the endoribonuclease YbeY family. It depends on Zn(2+) as a cofactor.

Its subcellular location is the cytoplasm. Functionally, single strand-specific metallo-endoribonuclease involved in late-stage 70S ribosome quality control and in maturation of the 3' terminus of the 16S rRNA. The protein is Endoribonuclease YbeY of Alkalilimnicola ehrlichii (strain ATCC BAA-1101 / DSM 17681 / MLHE-1).